The sequence spans 480 residues: 2-phosphoxylose phosphatase 1 (480 aa).

Residues 1–6 (MLFRNR) lie on the Cytoplasmic side of the membrane. The chain crosses the membrane as a helical; Signal-anchor for type II membrane protein span at residues 7 to 27 (FLLLLALAALLAFVSLSLQFF). The Lumenal portion of the chain corresponds to 28–480 (HLIPVSTPKN…YYDACHREGF (453 aa)). His97 acts as the Nucleophile in catalysis. 2 N-linked (GlcNAc...) asparagine glycosylation sites follow: Asn305 and Asn354. Asp379 (proton donor) is an active-site residue.

It belongs to the histidine acid phosphatase family. In terms of assembly, interacts with B3GAT3; the interaction increases the 2-phosphoxylose phosphatase activity of PXYLP1 during completion of linkage region formation in a B3GAT3-mediated manner. In terms of tissue distribution, widely expressed. Strongly expressed in spleen, fetal liver, moderately in placenta, pancreas, kidney, thymus and colon.

The protein localises to the golgi apparatus membrane. It carries out the reaction 3-O-[beta-D-GlcA-(1-&gt;3)-beta-D-Gal-(1-&gt;3)-beta-D-Gal-(1-&gt;4)-beta-D-2-O-P-Xyl]-L-seryl-[protein] + H2O = 3-O-(beta-D-GlcA-(1-&gt;3)-beta-D-Gal-(1-&gt;3)-beta-D-Gal-(1-&gt;4)-beta-D-Xyl)-L-seryl-[protein] + phosphate. Its function is as follows. Responsible for the 2-O-dephosphorylation of xylose in the glycosaminoglycan-protein linkage region of proteoglycans thereby regulating the amount of mature glycosaminoglycan (GAG) chains. Sulfated glycosaminoglycans (GAGs), including heparan sulfate and chondroitin sulfate, are synthesized on the so-called common GAG-protein linkage region (GlcUAbeta1-3Galbeta1-3Galbeta1-4Xylbeta1-O-Ser) of core proteins, which is formed by the stepwise addition of monosaccharide residues by the respective specific glycosyltransferases. Xylose 2-O-dephosphorylation during completion of linkage region formation is a prerequisite for the initiation and efficient elongation of the repeating disaccharide region of GAG chains. In Homo sapiens (Human), this protein is 2-phosphoxylose phosphatase 1.